Here is a 583-residue protein sequence, read N- to C-terminus: Aspartate--tRNA ligase (583 aa).

An L-aspartate-binding site is contributed by E174. An aspartate region spans residues 198–201; that stretch reads QTFK. R220 is an L-aspartate binding site. Residues 220–222 and Q229 each bind ATP; that span reads RDE. Position 445 (H445) interacts with L-aspartate. ATP is bound at residue E479. R486 contacts L-aspartate. Position 531–534 (531–534) interacts with ATP; sequence GLDR.

It belongs to the class-II aminoacyl-tRNA synthetase family. Type 1 subfamily. In terms of assembly, homodimer.

The protein resides in the cytoplasm. The catalysed reaction is tRNA(Asp) + L-aspartate + ATP = L-aspartyl-tRNA(Asp) + AMP + diphosphate. Functionally, catalyzes the attachment of L-aspartate to tRNA(Asp) in a two-step reaction: L-aspartate is first activated by ATP to form Asp-AMP and then transferred to the acceptor end of tRNA(Asp). The sequence is that of Aspartate--tRNA ligase from Flavobacterium psychrophilum (strain ATCC 49511 / DSM 21280 / CIP 103535 / JIP02/86).